The primary structure comprises 509 residues: Flotillin-like protein FloT (509 aa).

Residues 1 to 3 (MTM) are Cytoplasmic-facing. Residues 4 to 24 (PIIMIIGVVFFLLIALIAVFI) lie within the membrane without spanning it. Residues 25 to 509 (TKYRTAGPDE…KEAKTIQKSE (485 aa)) are Cytoplasmic-facing. Residues 119 to 301 (AAEQFLGKSK…KIIERQKQIE (183 aa)) form a PHB domain region. The interval 203–509 (RIAQVKRDAD…KEAKTIQKSE (307 aa)) is required for correct localization. Short sequence motifs (EA repeat) lie at residues 342–344 (AEA), 357–360 (AEAE), 370–373 (AEAE), and 390–394 (AEAEA). A not required for correct localization region spans residues 485-509 (KGNVKQSINELTNEIKEAKTIQKSE).

Belongs to the band 7/mec-2 family. Flotillin subfamily. As to quaternary structure, homooligomerizes. Oligomerizes in very large complexes in vitro. Interacts with FloA, FtsH, FtsX, OppA, SdhA and SecY in detergent-resistant membrane (DRM) fractions. Interacts with FtsH at midcell. Interacts with FloA. Interacts in vivo with KinC, FloA, FtsH and ResE. Interacts with ResE, colocalizes with ResE in FloT-only membrane rafts. Another study shows nearly complete colocalization with NfeD2, but only minor colocalization with FtsH or KinC.

It is found in the cell membrane. The protein localises to the membrane raft. Its function is as follows. Found in functional membrane microdomains (FMM) that may be equivalent to eukaryotic membrane rafts. FMMs are highly dynamic and increase in number as cells age. FloA and FloT function is partially redundant; double deletions have marked synthetic phenotypes. Flotillins are thought to be important factors in membrane fluidity, especially during periods of rapid growth in rich media. Whether specific proteins are associated with FMMs is controversial; in one study FloT rafts have been shown to include proteins involved in adaptation to stationary phase, while FloA-FloT rafts include proteins involved in differentiation including sporulation, biofilm formation and DNA uptake competence. Another (more finely resolved) study only showed association of NfeD2 with FloT rafts of all the proteins examined. Aids homooligomerization of KinC and KinD but not KinB, may prevent incorrect hetero-association of the above kinases. Simultaneous overexpression of both FloA and FloT leads to defects in cell division and differentiation, in part caused by stabilization of FtsH and its subsequent increased ability to degrade proteins. Cells make more biofilm, are about half as long, have less EzrA and more frequent Z-rings. Involved in spatial organization of membranes, perhaps recruiting proteins (e.g. NfeD2) to specific membrane regions. Plays a role in phosphorylation of master regulator Spo0A, an early sporulation event. Plays a non-redundant role with dynamin-like protein A (dynA) in membrane dynamics and cell shape. This chain is Flotillin-like protein FloT, found in Bacillus subtilis (strain 168).